A 119-amino-acid polypeptide reads, in one-letter code: Large ribosomal subunit protein bL17 (119 aa).

This sequence belongs to the bacterial ribosomal protein bL17 family. Part of the 50S ribosomal subunit. Contacts protein L32.

The chain is Large ribosomal subunit protein bL17 from Mycoplasma mycoides subsp. mycoides SC (strain CCUG 32753 / NCTC 10114 / PG1).